Reading from the N-terminus, the 233-residue chain is Small ribosomal subunit protein uS2 (233 aa).

Belongs to the universal ribosomal protein uS2 family.

The sequence is that of Small ribosomal subunit protein uS2 from Clostridium novyi (strain NT).